We begin with the raw amino-acid sequence, 315 residues long: Nucleotide-binding protein CGSHiEE_06315 (315 aa).

Residue 8–15 coordinates ATP; sequence GRSGAGKS. 56–59 serves as a coordination point for GTP; the sequence is DIRN.

This sequence belongs to the RapZ-like family.

In terms of biological role, displays ATPase and GTPase activities. The protein is Nucleotide-binding protein CGSHiEE_06315 of Haemophilus influenzae (strain PittEE).